The sequence spans 218 residues: Octanoyltransferase (218 aa).

In terms of domain architecture, BPL/LPL catalytic spans 45–218 (AGTADELWLL…TDALQRAIYS (174 aa)). Residues 84 to 91 (RGGQITYH), 151 to 153 (ALG), and 164 to 166 (GLA) contribute to the substrate site. Cys182 acts as the Acyl-thioester intermediate in catalysis.

Belongs to the LipB family.

It localises to the cytoplasm. It carries out the reaction octanoyl-[ACP] + L-lysyl-[protein] = N(6)-octanoyl-L-lysyl-[protein] + holo-[ACP] + H(+). The protein operates within protein modification; protein lipoylation via endogenous pathway; protein N(6)-(lipoyl)lysine from octanoyl-[acyl-carrier-protein]: step 1/2. Functionally, catalyzes the transfer of endogenously produced octanoic acid from octanoyl-acyl-carrier-protein onto the lipoyl domains of lipoate-dependent enzymes. Lipoyl-ACP can also act as a substrate although octanoyl-ACP is likely to be the physiological substrate. The protein is Octanoyltransferase of Thiobacillus denitrificans (strain ATCC 25259 / T1).